A 221-amino-acid polypeptide reads, in one-letter code: ATP-dependent dethiobiotin synthetase BioD (221 aa).

Position 13–18 (D13–Y18) interacts with ATP. T17 serves as a coordination point for Mg(2+). The active site involves K38. S42 provides a ligand contact to substrate. Residues D51, E112 to G115, and N176 to R177 contribute to the ATP site. Positions 51 and 112 each coordinate Mg(2+).

It belongs to the dethiobiotin synthetase family. As to quaternary structure, homodimer. Requires Mg(2+) as cofactor.

It is found in the cytoplasm. The enzyme catalyses (7R,8S)-7,8-diammoniononanoate + CO2 + ATP = (4R,5S)-dethiobiotin + ADP + phosphate + 3 H(+). It functions in the pathway cofactor biosynthesis; biotin biosynthesis; biotin from 7,8-diaminononanoate: step 1/2. In terms of biological role, catalyzes a mechanistically unusual reaction, the ATP-dependent insertion of CO2 between the N7 and N8 nitrogen atoms of 7,8-diaminopelargonic acid (DAPA, also called 7,8-diammoniononanoate) to form a ureido ring. The polypeptide is ATP-dependent dethiobiotin synthetase BioD (Brachyspira hyodysenteriae (strain ATCC 49526 / WA1)).